The chain runs to 198 residues: 3-isopropylmalate dehydratase small subunit (198 aa).

This sequence belongs to the LeuD family. LeuD type 1 subfamily. As to quaternary structure, heterodimer of LeuC and LeuD.

It carries out the reaction (2R,3S)-3-isopropylmalate = (2S)-2-isopropylmalate. It participates in amino-acid biosynthesis; L-leucine biosynthesis; L-leucine from 3-methyl-2-oxobutanoate: step 2/4. Its function is as follows. Catalyzes the isomerization between 2-isopropylmalate and 3-isopropylmalate, via the formation of 2-isopropylmaleate. The sequence is that of 3-isopropylmalate dehydratase small subunit from Mycobacterium avium (strain 104).